The primary structure comprises 552 residues: Putative lipase ATG15 (552 aa).

Topologically, residues 1–26 (MLHITEKEQTRGLRQLEKRGKRLLPP) are cytoplasmic. Residues 27–49 (LIKFIWFCLISAACVAATTFYWL) traverse the membrane as a helical; Signal-anchor for type II membrane protein segment. Over 50–552 (RLSPVHNIHK…WRFVSHDDKE (503 aa)) the chain is Lumenal. Asn63, Asn147, Asn239, Asn307, and Asn391 each carry an N-linked (GlcNAc...) asparagine glycan. Ser409 acts as the Charge relay system in catalysis. Residue Asn526 is glycosylated (N-linked (GlcNAc...) asparagine).

It belongs to the AB hydrolase superfamily. Lipase family. As to quaternary structure, binds to both phosphatidylinositol (PI) and phosphatidylinositol 3,5-bisphosphate (PIP2).

It is found in the endosome. The protein localises to the multivesicular body membrane. The protein resides in the prevacuolar compartment membrane. It carries out the reaction a triacylglycerol + H2O = a diacylglycerol + a fatty acid + H(+). In terms of biological role, lipase which is essential for lysis of subvacuolar cytoplasm to vacuole targeted bodies and intravacuolar autophagic bodies. Involved in the lysis of intravacuolar multivesicular body (MVB) vesicles. The intravacuolar membrane disintegration by ATG15 is critical to life span extension. The chain is Putative lipase ATG15 (ATG15) from Lodderomyces elongisporus (strain ATCC 11503 / CBS 2605 / JCM 1781 / NBRC 1676 / NRRL YB-4239) (Yeast).